Here is a 324-residue protein sequence, read N- to C-terminus: Fibronectin type III domain-containing protein 8 (324 aa).

Residues 179–280 (PDTPFIFEHT…KPYKFATLAT (102 aa)) enclose the Fibronectin type-III domain.

This chain is Fibronectin type III domain-containing protein 8 (FNDC8), found in Macaca fascicularis (Crab-eating macaque).